The sequence spans 60 residues: MTILKSISSMGISNRKNSFSFVSTNSMIETNQNVNSVSKSGYSKLIKGAALMAEGISGFF.

This is an uncharacterized protein from Dictyostelium discoideum (Social amoeba).